A 640-amino-acid chain; its full sequence is Threonine--tRNA ligase (640 aa).

Positions 1–59 (MKIKVKLPDGKEKEYDRGITPAEIAKELGVKKAIGAVVNGELWDLKRPIENDCELRLVT) constitute a TGS domain. Positions 240 to 531 (DHRKLGPHLE…LIEHFAGAFP (292 aa)) are catalytic. Zn(2+)-binding residues include cysteine 332, histidine 383, and histidine 508.

It belongs to the class-II aminoacyl-tRNA synthetase family. As to quaternary structure, homodimer. Zn(2+) is required as a cofactor.

The protein resides in the cytoplasm. It catalyses the reaction tRNA(Thr) + L-threonine + ATP = L-threonyl-tRNA(Thr) + AMP + diphosphate + H(+). Functionally, catalyzes the attachment of threonine to tRNA(Thr) in a two-step reaction: L-threonine is first activated by ATP to form Thr-AMP and then transferred to the acceptor end of tRNA(Thr). Also edits incorrectly charged L-seryl-tRNA(Thr). The protein is Threonine--tRNA ligase of Thermotoga petrophila (strain ATCC BAA-488 / DSM 13995 / JCM 10881 / RKU-1).